We begin with the raw amino-acid sequence, 230 residues long: Osmotin-like protein PR-5x (230 aa).

Positions 1-25 (MYTNMGYLTSSFIFFFLALVTYTYA) are cleaved as a signal peptide. Disulfide bonds link cysteine 34–cysteine 229, cysteine 76–cysteine 86, cysteine 91–cysteine 97, cysteine 145–cysteine 217, cysteine 150–cysteine 200, cysteine 158–cysteine 168, cysteine 172–cysteine 181, and cysteine 182–cysteine 187.

This sequence belongs to the thaumatin family.

It is found in the secreted. The protein resides in the vacuole. The catalysed reaction is Endohydrolysis of (1-&gt;3)- or (1-&gt;4)-linkages in beta-D-glucans when the glucose residue whose reducing group is involved in the linkage to be hydrolyzed is itself substituted at C-3.. In terms of biological role, antifungal protein. May bind to beta-glucans and have beta-1,3-D-glucanase activity. The sequence is that of Osmotin-like protein PR-5x from Solanum lycopersicum (Tomato).